A 124-amino-acid polypeptide reads, in one-letter code: MARIAGVDLPSNKKIEIALTYIYGIGRTTSKKILQATGVDPNKRVKDLTEEEISKLREEIENNYKVEGDLRQEVAANIRRLIEIGCYRGIRHKRGLPVRGQRTRCNARTRKGPRKTVGAKRKEK.

Residues 98–124 form a disordered region; it reads VRGQRTRCNARTRKGPRKTVGAKRKEK.

This sequence belongs to the universal ribosomal protein uS13 family. In terms of assembly, part of the 30S ribosomal subunit. Forms a loose heterodimer with protein S19. Forms two bridges to the 50S subunit in the 70S ribosome.

In terms of biological role, located at the top of the head of the 30S subunit, it contacts several helices of the 16S rRNA. In the 70S ribosome it contacts the 23S rRNA (bridge B1a) and protein L5 of the 50S subunit (bridge B1b), connecting the 2 subunits; these bridges are implicated in subunit movement. Contacts the tRNAs in the A and P-sites. This Dictyoglomus thermophilum (strain ATCC 35947 / DSM 3960 / H-6-12) protein is Small ribosomal subunit protein uS13.